We begin with the raw amino-acid sequence, 248 residues long: MADS-box transcription factor 8 (248 aa).

An MADS-box domain is found at Met-1–Gln-61. The K-box domain occupies Val-90 to Leu-180.

In terms of assembly, may interact with the K-box of MADS6 and MADS16. May interact with MADS13 and MADS18. Binds to FCA. In terms of tissue distribution, expressed in lodicules, stamens and carpels.

It localises to the nucleus. Probable transcription factor. May be involved in the control of flowering time. The polypeptide is MADS-box transcription factor 8 (MADS8) (Oryza sativa subsp. japonica (Rice)).